The following is a 305-amino-acid chain: Ribonuclease Z (305 aa).

Residues histidine 61, histidine 63, aspartate 65, histidine 66, histidine 138, aspartate 208, and histidine 266 each coordinate Zn(2+). The active-site Proton acceptor is aspartate 65.

It belongs to the RNase Z family. As to quaternary structure, homodimer. Zn(2+) serves as cofactor.

The catalysed reaction is Endonucleolytic cleavage of RNA, removing extra 3' nucleotides from tRNA precursor, generating 3' termini of tRNAs. A 3'-hydroxy group is left at the tRNA terminus and a 5'-phosphoryl group is left at the trailer molecule.. Its function is as follows. Zinc phosphodiesterase, which displays some tRNA 3'-processing endonuclease activity. Probably involved in tRNA maturation, by removing a 3'-trailer from precursor tRNA. This Methanosarcina mazei (strain ATCC BAA-159 / DSM 3647 / Goe1 / Go1 / JCM 11833 / OCM 88) (Methanosarcina frisia) protein is Ribonuclease Z.